The sequence spans 150 residues: MHITILNGPNLNLLGTRQPEVYGATTLADIEHMCQRKAQALGLEIEFNQTNHEGVLIDQIHAARSESDGLIINAGAYTHTSVALMDAVASVSLPTVEVHLSNIHARESFRHTSFLSPVALGLICGFGATGYVMALDGIWAHLTAADSARP.

The active-site Proton acceptor is Tyr22. Substrate-binding residues include Asn73, His79, and Asp86. His99 acts as the Proton donor in catalysis. Substrate-binding positions include Leu100–Ser101 and Arg110.

This sequence belongs to the type-II 3-dehydroquinase family. In terms of assembly, homododecamer.

It catalyses the reaction 3-dehydroquinate = 3-dehydroshikimate + H2O. It functions in the pathway metabolic intermediate biosynthesis; chorismate biosynthesis; chorismate from D-erythrose 4-phosphate and phosphoenolpyruvate: step 3/7. In terms of biological role, catalyzes a trans-dehydration via an enolate intermediate. In Dinoroseobacter shibae (strain DSM 16493 / NCIMB 14021 / DFL 12), this protein is 3-dehydroquinate dehydratase.